A 494-amino-acid polypeptide reads, in one-letter code: Glutamyl-tRNA(Gln) amidotransferase subunit A (494 aa).

Active-site charge relay system residues include Lys78 and Ser158. The active-site Acyl-ester intermediate is the Ser182.

It belongs to the amidase family. GatA subfamily. As to quaternary structure, heterotrimer of A, B and C subunits.

It catalyses the reaction L-glutamyl-tRNA(Gln) + L-glutamine + ATP + H2O = L-glutaminyl-tRNA(Gln) + L-glutamate + ADP + phosphate + H(+). Allows the formation of correctly charged Gln-tRNA(Gln) through the transamidation of misacylated Glu-tRNA(Gln) in organisms which lack glutaminyl-tRNA synthetase. The reaction takes place in the presence of glutamine and ATP through an activated gamma-phospho-Glu-tRNA(Gln). The protein is Glutamyl-tRNA(Gln) amidotransferase subunit A of Xanthobacter autotrophicus (strain ATCC BAA-1158 / Py2).